Here is a 120-residue protein sequence, read N- to C-terminus: Nascent polypeptide-associated complex protein (120 aa).

The NAC-A/B domain occupies 12 to 80 (GMNPAKMKQM…VKEVPKSLEI (69 aa)).

It belongs to the NAC-alpha family. In terms of assembly, homodimer. Interacts with the ribosome. Binds ribosomal RNA.

Contacts the emerging nascent chain on the ribosome. The polypeptide is Nascent polypeptide-associated complex protein (Methanosarcina mazei (strain ATCC BAA-159 / DSM 3647 / Goe1 / Go1 / JCM 11833 / OCM 88) (Methanosarcina frisia)).